The chain runs to 781 residues: Translation initiation factor IF-2 (781 aa).

The segment at 44–195 (RQLDNAVDGT…TPPKPKELPE (152 aa)) is disordered. Basic and acidic residues predominate over residues 53-65 (TNKKAEAPKKETT). Positions 66–81 (SNENGNSKGPNKPNMT) are enriched in polar residues. The span at 82–93 (NSNEKSNKPNKP) shows a compositional bias: low complexity. Polar residues predominate over residues 115–126 (KPANTGNQTQAS). Residues 127-169 (GNQQAGGQKRNNNNNSNRPGGGNPNRPGGNNRPNRGGNFNNKG) show a composition bias toward low complexity. The 170-residue stretch at 282-451 (ERPPVVTIMG…LLVSEVEELK (170 aa)) folds into the tr-type G domain. The interval 291 to 298 (GHVDHGKT) is G1. GTP is bound at residue 291–298 (GHVDHGKT). Residues 316–320 (GITQH) form a G2 region. The tract at residues 337 to 340 (DTPG) is G3. Residues 337-341 (DTPGH) and 391-394 (NKID) contribute to the GTP site. Residues 391–394 (NKID) are G4. Residues 427 to 429 (SAK) form a G5 region.

It belongs to the TRAFAC class translation factor GTPase superfamily. Classic translation factor GTPase family. IF-2 subfamily.

It is found in the cytoplasm. In terms of biological role, one of the essential components for the initiation of protein synthesis. Protects formylmethionyl-tRNA from spontaneous hydrolysis and promotes its binding to the 30S ribosomal subunits. Also involved in the hydrolysis of GTP during the formation of the 70S ribosomal complex. This chain is Translation initiation factor IF-2, found in Listeria monocytogenes serotype 4a (strain HCC23).